The sequence spans 443 residues: Exodeoxyribonuclease 7 large subunit (443 aa).

This sequence belongs to the XseA family. In terms of assembly, heterooligomer composed of large and small subunits.

It is found in the cytoplasm. It carries out the reaction Exonucleolytic cleavage in either 5'- to 3'- or 3'- to 5'-direction to yield nucleoside 5'-phosphates.. Functionally, bidirectionally degrades single-stranded DNA into large acid-insoluble oligonucleotides, which are then degraded further into small acid-soluble oligonucleotides. The sequence is that of Exodeoxyribonuclease 7 large subunit from Vibrio vulnificus (strain CMCP6).